The primary structure comprises 332 residues: Anthranilate phosphoribosyltransferase (332 aa).

Residues Gly-80, 83-84, Thr-88, 90-93, 108-116, and Ser-120 contribute to the 5-phospho-alpha-D-ribose 1-diphosphate site; these read GD, NLST, and KHGNRSASG. Gly-80 lines the anthranilate pocket. Position 92 (Ser-92) interacts with Mg(2+). Asn-111 provides a ligand contact to anthranilate. Position 166 (Arg-166) interacts with anthranilate. Mg(2+) is bound by residues Asp-224 and Glu-225.

The protein belongs to the anthranilate phosphoribosyltransferase family. As to quaternary structure, homodimer. Mg(2+) serves as cofactor.

The catalysed reaction is N-(5-phospho-beta-D-ribosyl)anthranilate + diphosphate = 5-phospho-alpha-D-ribose 1-diphosphate + anthranilate. The protein operates within amino-acid biosynthesis; L-tryptophan biosynthesis; L-tryptophan from chorismate: step 2/5. In terms of biological role, catalyzes the transfer of the phosphoribosyl group of 5-phosphorylribose-1-pyrophosphate (PRPP) to anthranilate to yield N-(5'-phosphoribosyl)-anthranilate (PRA). The protein is Anthranilate phosphoribosyltransferase of Pyrobaculum calidifontis (strain DSM 21063 / JCM 11548 / VA1).